Here is a 273-residue protein sequence, read N- to C-terminus: tRNA pseudouridine synthase B (273 aa).

The active-site Nucleophile is aspartate 38.

Belongs to the pseudouridine synthase TruB family. Type 1 subfamily.

The catalysed reaction is uridine(55) in tRNA = pseudouridine(55) in tRNA. Functionally, responsible for synthesis of pseudouridine from uracil-55 in the psi GC loop of transfer RNAs. In Campylobacter curvus (strain 525.92), this protein is tRNA pseudouridine synthase B.